The sequence spans 62 residues: Large ribosomal subunit protein uL30 (62 aa).

This sequence belongs to the universal ribosomal protein uL30 family. As to quaternary structure, part of the 50S ribosomal subunit.

The sequence is that of Large ribosomal subunit protein uL30 from Marinobacter nauticus (strain ATCC 700491 / DSM 11845 / VT8) (Marinobacter aquaeolei).